We begin with the raw amino-acid sequence, 290 residues long: RWD domain-containing protein 2B (290 aa).

One can recognise an RWD domain in the interval 12–136; the sequence is SELDLLASMF…EWVKEHAFDY (125 aa).

This is RWD domain-containing protein 2B (Rwdd2b) from Mus musculus (Mouse).